The following is a 275-amino-acid chain: Formamidopyrimidine-DNA glycosylase (275 aa).

Catalysis depends on P2, which acts as the Schiff-base intermediate with DNA. The active-site Proton donor is E3. K58 acts as the Proton donor; for beta-elimination activity in catalysis. The DNA site is built by H93, R111, and R156. An FPG-type zinc finger spans residues 241–275 (FVYDRAGQPCRVCNTPIRQIVQGQRSTYFCPTCQR). R265 acts as the Proton donor; for delta-elimination activity in catalysis.

Belongs to the FPG family. In terms of assembly, monomer. The cofactor is Zn(2+).

It catalyses the reaction Hydrolysis of DNA containing ring-opened 7-methylguanine residues, releasing 2,6-diamino-4-hydroxy-5-(N-methyl)formamidopyrimidine.. The catalysed reaction is 2'-deoxyribonucleotide-(2'-deoxyribose 5'-phosphate)-2'-deoxyribonucleotide-DNA = a 3'-end 2'-deoxyribonucleotide-(2,3-dehydro-2,3-deoxyribose 5'-phosphate)-DNA + a 5'-end 5'-phospho-2'-deoxyribonucleoside-DNA + H(+). Functionally, involved in base excision repair of DNA damaged by oxidation or by mutagenic agents. Acts as a DNA glycosylase that recognizes and removes damaged bases. Has a preference for oxidized purines, such as 7,8-dihydro-8-oxoguanine (8-oxoG). Has AP (apurinic/apyrimidinic) lyase activity and introduces nicks in the DNA strand. Cleaves the DNA backbone by beta-delta elimination to generate a single-strand break at the site of the removed base with both 3'- and 5'-phosphates. This is Formamidopyrimidine-DNA glycosylase from Burkholderia lata (strain ATCC 17760 / DSM 23089 / LMG 22485 / NCIMB 9086 / R18194 / 383).